Here is a 365-residue protein sequence, read N- to C-terminus: Protein RecA (365 aa).

73-80 provides a ligand contact to ATP; the sequence is GPESSGKT.

The protein belongs to the RecA family.

It localises to the cytoplasm. Its function is as follows. Can catalyze the hydrolysis of ATP in the presence of single-stranded DNA, the ATP-dependent uptake of single-stranded DNA by duplex DNA, and the ATP-dependent hybridization of homologous single-stranded DNAs. It interacts with LexA causing its activation and leading to its autocatalytic cleavage. In Prochlorococcus marinus (strain MIT 9215), this protein is Protein RecA.